A 316-amino-acid polypeptide reads, in one-letter code: Polyprenyl transferase prhE (316 aa).

Helical transmembrane passes span 45-65 (VVGVAYTAAISPVTLPSTFLL), 69-89 (VILSLWGFCIRSAGCAWNDLI), 114-134 (GAALLAAFMFGCGGSLLLLLP), 135-155 (SQCAFEAAIVVFFALLYPFGK), 163-183 (LILTNIAWAIPMAMSSLDMSP), 188-208 (IPTLAMSFSIASVIVMIDIVY), 231-253 (ITDQIAYGLFFSGTLSLLVGGIL), 257-276 (GFPFLIFSVGGHFLGFLRFL), and 296-316 (SCLLATMLLVFGLCFEYCVRL).

It belongs to the UbiA prenyltransferase family. It depends on Mg(2+) as a cofactor.

It is found in the membrane. The enzyme catalyses 3,5-dimethylorsellinate + (2E,6E)-farnesyl diphosphate = (3R)-3-farnesyl-6-hydroxy-2,3,5-trimethyl-4-oxocyclohexa-1,5-diene-1-carboxylate + diphosphate + H(+). It functions in the pathway secondary metabolite biosynthesis; terpenoid biosynthesis. Its function is as follows. Polyprenyl transferase; part of the gene cluster that mediates the biosynthesis of paraherquonin, a meroterpenoid with a unique, highly congested hexacyclic molecular architecture. The first step of the pathway is the synthesis of 3,5-dimethylorsellinic acid (DMOA) by the polyketide synthase prhL. Synthesis of DMOA is followed by farnesylation by the prenyltransferase prhE, methylesterification by the methyl-transferase prhM, epoxidation of the prenyl chain by the flavin-dependent monooxygenase prhF, and cyclization of the farnesyl moiety by the terpene cyclase prhH, to yield the tetracyclic intermediate, protoaustinoid A. The short chain dehydrogenase prhI then oxidizes the C-3 alcohol group of the terpene cyclase product to transform protoaustinoid A into protoaustinoid B. The FAD-binding monooxygenase prhJ catalyzes the oxidation of protoaustinoid B into preaustinoid A which is further oxidized into preaustinoid A1 by FAD-binding monooxygenase phrK. Finally, prhA leads to berkeleydione via the berkeleyone B intermediate. PrhA is a multifunctional dioxygenase that first desaturates at C5-C6 to form berkeleyone B, followed by rearrangement of the A/B-ring to form the cycloheptadiene moiety in berkeleydione. Berkeleydione serves as the key intermediate for the biosynthesis of paraherquonin as well as many other meroterpenoids. The cytochrome P450 monooxygenases prhB, prhD, and prhN, as well as the isomerase prhC, are probably involved in the late stage of paraherquonin biosynthesis, after the production of berkeleydione. Especially prhC might be a multifunctional enzyme that catalyzes the D-ring expansion via intramolecular methoxy rearrangement, as well as the hydrolysis of the expanded D-ring. The sequence is that of Polyprenyl transferase prhE from Penicillium brasilianum.